A 487-amino-acid polypeptide reads, in one-letter code: Iron-sulfur cluster assembly SufBD family protein ycf24 (487 aa).

Belongs to the iron-sulfur cluster assembly SufBD family.

It is found in the plastid. The protein resides in the chloroplast. The polypeptide is Iron-sulfur cluster assembly SufBD family protein ycf24 (ycf24) (Porphyra purpurea (Red seaweed)).